A 257-amino-acid polypeptide reads, in one-letter code: 24 kDa outer membrane protein (257 aa).

The N-terminal stretch at 1-21 is a signal peptide; sequence MKNKSKLLACCLMALPISSFS.

The protein belongs to the MipA/OmpV family.

It localises to the cell outer membrane. In Pasteurella multocida (strain Pm70), this protein is 24 kDa outer membrane protein.